Reading from the N-terminus, the 157-residue chain is Transcription elongation factor GreA (157 aa).

Positions 9 to 30 form a coiled coil; that stretch reads LEGAQQLKEELKRRKTTDRKRI.

Belongs to the GreA/GreB family.

Necessary for efficient RNA polymerase transcription elongation past template-encoded arresting sites. The arresting sites in DNA have the property of trapping a certain fraction of elongating RNA polymerases that pass through, resulting in locked ternary complexes. Cleavage of the nascent transcript by cleavage factors such as GreA or GreB allows the resumption of elongation from the new 3'terminus. GreA releases sequences of 2 to 3 nucleotides. The chain is Transcription elongation factor GreA from Magnetococcus marinus (strain ATCC BAA-1437 / JCM 17883 / MC-1).